A 416-amino-acid polypeptide reads, in one-letter code: Serine hydroxymethyltransferase (416 aa).

(6S)-5,6,7,8-tetrahydrofolate-binding positions include Leu-121 and 125 to 127; that span reads GHL. Lys-229 is subject to N6-(pyridoxal phosphate)lysine.

It belongs to the SHMT family. In terms of assembly, homodimer. Requires pyridoxal 5'-phosphate as cofactor.

The protein localises to the cytoplasm. The catalysed reaction is (6R)-5,10-methylene-5,6,7,8-tetrahydrofolate + glycine + H2O = (6S)-5,6,7,8-tetrahydrofolate + L-serine. The protein operates within one-carbon metabolism; tetrahydrofolate interconversion. Its pathway is amino-acid biosynthesis; glycine biosynthesis; glycine from L-serine: step 1/1. In terms of biological role, catalyzes the reversible interconversion of serine and glycine with tetrahydrofolate (THF) serving as the one-carbon carrier. This reaction serves as the major source of one-carbon groups required for the biosynthesis of purines, thymidylate, methionine, and other important biomolecules. Also exhibits THF-independent aldolase activity toward beta-hydroxyamino acids, producing glycine and aldehydes, via a retro-aldol mechanism. The polypeptide is Serine hydroxymethyltransferase (Neisseria gonorrhoeae (strain ATCC 700825 / FA 1090)).